Reading from the N-terminus, the 119-residue chain is Large ribosomal subunit protein bL19 (119 aa).

Belongs to the bacterial ribosomal protein bL19 family.

In terms of biological role, this protein is located at the 30S-50S ribosomal subunit interface and may play a role in the structure and function of the aminoacyl-tRNA binding site. This Leuconostoc citreum (strain KM20) protein is Large ribosomal subunit protein bL19.